The chain runs to 337 residues: tRNA N6-adenosine threonylcarbamoyltransferase (337 aa).

Fe cation is bound by residues histidine 107 and histidine 111. Residues 129–133 (LISGG), aspartate 162, glycine 175, and asparagine 271 each bind substrate. Aspartate 299 is a binding site for Fe cation.

Belongs to the KAE1 / TsaD family. The cofactor is Fe(2+).

The protein resides in the cytoplasm. The enzyme catalyses L-threonylcarbamoyladenylate + adenosine(37) in tRNA = N(6)-L-threonylcarbamoyladenosine(37) in tRNA + AMP + H(+). Functionally, required for the formation of a threonylcarbamoyl group on adenosine at position 37 (t(6)A37) in tRNAs that read codons beginning with adenine. Is involved in the transfer of the threonylcarbamoyl moiety of threonylcarbamoyl-AMP (TC-AMP) to the N6 group of A37, together with TsaE and TsaB. TsaD likely plays a direct catalytic role in this reaction. This Sulfurovum sp. (strain NBC37-1) protein is tRNA N6-adenosine threonylcarbamoyltransferase.